Here is a 61-residue protein sequence, read N- to C-terminus: MQKKLLEIIVCPFCYTRLFMNDTETELICNIENISFPLKQGIPVLLKNQIRYLNCKIIDNQ.

This sequence belongs to the UPF0434 family.

This chain is UPF0434 protein Bfl377, found in Blochmanniella floridana.